Here is an 810-residue protein sequence, read N- to C-terminus: Cation/H(+) antiporter 18 (810 aa).

Transmembrane regions (helical) follow at residues 29–49 (FALPLAILQIVIVIVLTRVLA), 59–76 (RVIAEVIGGIMLGPSLLG), 91–111 (LTVLETLANLGLLFFLFLAGL), 126–146 (LGIALAGITLPFALGIGSSFV), 157–177 (STAFLVFMGVALSITAFPVLA), 193–213 (LAMSAAAVNDVAAWILLALAI), 223–243 (LVSLWVFLSGCAFVIGASFII), 277–297 (FITDAIGIHSMFGAFVVGVLI), 314–334 (LVSGLFLPLYFVASGLKTNVA), 343–363 (GLLVLVTATACFGKILGTLGV), 374–394 (AITLGFLMNTKGLVELIVLNI), and 406–426 (FAIMVLMALFTTFITTPVVMA). S804 bears the Phosphoserine mark.

Belongs to the monovalent cation:proton antiporter 2 (CPA2) transporter (TC 2.A.37) family. CHX (TC 2.A.37.4) subfamily. Expressed in roots.

The protein localises to the membrane. May operate as a cation/H(+) antiporter. This Arabidopsis thaliana (Mouse-ear cress) protein is Cation/H(+) antiporter 18 (CHX18).